We begin with the raw amino-acid sequence, 189 residues long: UPF0312 protein VV2_0231 (189 aa).

Residues 1 to 22 form the signal peptide; sequence MRKSVIATGLALMMAVPFAANA.

Belongs to the UPF0312 family. Type 1 subfamily.

Its subcellular location is the periplasm. This Vibrio vulnificus (strain CMCP6) protein is UPF0312 protein VV2_0231.